We begin with the raw amino-acid sequence, 167 residues long: U-scoloptoxin-Er5c (167 aa).

Residues 1-22 form the signal peptide; the sequence is MKTNCEFPLLCLLIVLVANVEG. Residues 23 to 94 constitute a propeptide that is removed on maturation; the sequence is EVEDTGLKMV…KRLWRNWERR (72 aa). 3 RLWRNWE repeats span residues 34–40, 61–67, and 86–92; these read RLWRNWE. The residue at position 95 (glutamine 95) is a Pyrrolidone carboxylic acid. The stretch at 107 to 113 is one RLWRNWE 4; approximate repeat; the sequence is ELWRNWE. Positions 112–118 are excised as a propeptide; that stretch reads WEDLKRR. Pyrrolidone carboxylic acid is present on glutamine 119. One copy of the RLWRNWE 5 repeat lies at 134-140; that stretch reads RLWRNWE. Positions 139-167 are excised as a propeptide; the sequence is WEDNHATLRKRSADSLSRQKRLGRERGKE. The tract at residues 147 to 167 is disordered; sequence RKRSADSLSRQKRLGRERGKE.

The protein belongs to the scoloptoxin-08 family. Expressed by the venom gland.

The protein localises to the secreted. This is U-scoloptoxin-Er5c from Ethmostigmus rubripes (Giant centipede).